Here is a 469-residue protein sequence, read N- to C-terminus: D-3-phosphoglycerate dehydrogenase 1 (469 aa).

Phosphoserine is present on residues serine 22, serine 29, and serine 33. NAD(+) contacts are provided by residues 208–209 (HI), aspartate 228, 285–287 (ASR), and aspartate 311. Arginine 287 is a catalytic residue. Glutamate 316 is an active-site residue. The active-site Proton donor is the histidine 347. 347 to 350 (HIGG) serves as a coordination point for NAD(+). In terms of domain architecture, ACT spans 399–469 (RVLYIHQNVP…SAKISIRLLY (71 aa)).

Belongs to the D-isomer specific 2-hydroxyacid dehydrogenase family.

It carries out the reaction (2R)-3-phosphoglycerate + NAD(+) = 3-phosphooxypyruvate + NADH + H(+). It catalyses the reaction (R)-2-hydroxyglutarate + NAD(+) = 2-oxoglutarate + NADH + H(+). Its pathway is amino-acid biosynthesis; L-serine biosynthesis; L-serine from 3-phospho-D-glycerate: step 1/3. Functionally, catalyzes the reversible oxidation of 3-phospho-D-glycerate to 3-phosphonooxypyruvate, the first step of the phosphorylated L-serine biosynthesis pathway. Also catalyzes the reversible oxidation of 2-hydroxyglutarate to 2-oxoglutarate. This is D-3-phosphoglycerate dehydrogenase 1 (SER3) from Saccharomyces cerevisiae (strain ATCC 204508 / S288c) (Baker's yeast).